Reading from the N-terminus, the 76-residue chain is UPF0352 protein ECA2748 (76 aa).

It belongs to the UPF0352 family.

The polypeptide is UPF0352 protein ECA2748 (Pectobacterium atrosepticum (strain SCRI 1043 / ATCC BAA-672) (Erwinia carotovora subsp. atroseptica)).